A 455-amino-acid polypeptide reads, in one-letter code: La-related protein 6C (455 aa).

A compositionally biased stretch (basic and acidic residues) spans 1–20; it reads MAQMQREEVESVTTEKKRLD. Positions 1 to 29 are disordered; that stretch reads MAQMQREEVESVTTEKKRLDGGGGSSGAQ. The 92-residue stretch at 138 to 229 folds into the HTH La-type RNA-binding domain; the sequence is NLLSDDLRLK…KRTSQFTDRD (92 aa). One can recognise an RRM domain in the interval 236-324; sequence RTVVAENLPD…KGLRVRLLLR (89 aa). Disordered regions lie at residues 348-396 and 414-455; these read SYES…YAVG and SLGS…PNNL.

It localises to the nucleus. In terms of biological role, transcriptional regulator. In Arabidopsis thaliana (Mouse-ear cress), this protein is La-related protein 6C (LARP6C).